We begin with the raw amino-acid sequence, 320 residues long: ADP-L-glycero-D-manno-heptose-6-epimerase (320 aa).

Residues 10 to 11 (FI), 31 to 32 (DN), Lys-38, Lys-53, 75 to 79 (LGACS), and Asn-92 each bind NADP(+). The active-site Proton acceptor is the Tyr-139. Lys-143 contacts NADP(+). Asn-168 is a substrate binding site. Val-169 and Lys-177 together coordinate NADP(+). Lys-177 (proton acceptor) is an active-site residue. Substrate-binding positions include Gly-179, His-186, 200–203 (FEGS), Arg-213, and Tyr-277.

The protein belongs to the NAD(P)-dependent epimerase/dehydratase family. HldD subfamily. Homopentamer. It depends on NADP(+) as a cofactor.

The enzyme catalyses ADP-D-glycero-beta-D-manno-heptose = ADP-L-glycero-beta-D-manno-heptose. It functions in the pathway nucleotide-sugar biosynthesis; ADP-L-glycero-beta-D-manno-heptose biosynthesis; ADP-L-glycero-beta-D-manno-heptose from D-glycero-beta-D-manno-heptose 7-phosphate: step 4/4. In terms of biological role, catalyzes the interconversion between ADP-D-glycero-beta-D-manno-heptose and ADP-L-glycero-beta-D-manno-heptose via an epimerization at carbon 6 of the heptose. The sequence is that of ADP-L-glycero-D-manno-heptose-6-epimerase from Alkalilimnicola ehrlichii (strain ATCC BAA-1101 / DSM 17681 / MLHE-1).